Here is a 201-residue protein sequence, read N- to C-terminus: Histidinol dehydrogenase (201 aa).

Belongs to the histidinol dehydrogenase family. As to quaternary structure, homodimer. Zn(2+) is required as a cofactor.

It carries out the reaction L-histidinol + 2 NAD(+) + H2O = L-histidine + 2 NADH + 3 H(+). The protein operates within amino-acid biosynthesis; L-histidine biosynthesis; L-histidine from 5-phospho-alpha-D-ribose 1-diphosphate: step 9/9. Catalyzes the sequential NAD-dependent oxidations of L-histidinol to L-histidinaldehyde and then to L-histidine. The protein is Histidinol dehydrogenase (hisD) of Buchnera aphidicola subsp. Diuraphis noxia.